Reading from the N-terminus, the 124-residue chain is Small ribosomal subunit protein uS13 (124 aa).

Positions 98-124 are disordered; that stretch reads VRGQRTKTNARTRKGPKRTIAGKKKAR.

It belongs to the universal ribosomal protein uS13 family. In terms of assembly, part of the 30S ribosomal subunit. Forms a loose heterodimer with protein S19. Forms two bridges to the 50S subunit in the 70S ribosome.

Its function is as follows. Located at the top of the head of the 30S subunit, it contacts several helices of the 16S rRNA. In the 70S ribosome it contacts the 23S rRNA (bridge B1a) and protein L5 of the 50S subunit (bridge B1b), connecting the 2 subunits; these bridges are implicated in subunit movement. Contacts the tRNAs in the A and P-sites. In Mycobacterium leprae (strain Br4923), this protein is Small ribosomal subunit protein uS13.